Here is a 343-residue protein sequence, read N- to C-terminus: Anthranilate phosphoribosyltransferase (343 aa).

5-phospho-alpha-D-ribose 1-diphosphate contacts are provided by residues glycine 84, 87–88, threonine 92, 94–97, 112–120, and serine 124; these read GD, NIST, and KHGNRSASS. An anthranilate-binding site is contributed by glycine 84. Serine 96 is a Mg(2+) binding site. Asparagine 115 is a binding site for anthranilate. Residue arginine 170 coordinates anthranilate. 2 residues coordinate Mg(2+): aspartate 229 and glutamate 230.

The protein belongs to the anthranilate phosphoribosyltransferase family. Homodimer. Requires Mg(2+) as cofactor.

It catalyses the reaction N-(5-phospho-beta-D-ribosyl)anthranilate + diphosphate = 5-phospho-alpha-D-ribose 1-diphosphate + anthranilate. It functions in the pathway amino-acid biosynthesis; L-tryptophan biosynthesis; L-tryptophan from chorismate: step 2/5. Catalyzes the transfer of the phosphoribosyl group of 5-phosphorylribose-1-pyrophosphate (PRPP) to anthranilate to yield N-(5'-phosphoribosyl)-anthranilate (PRA). This is Anthranilate phosphoribosyltransferase from Bordetella avium (strain 197N).